The sequence spans 1208 residues: MVGQEKEQSWIPKIFRKKVCTTFIVDLHDDAGGTLCQCGQPRDAHPSVAVEDAFGAAVVTEWNSDEHTTEKPTDAYGDLDFTYSGRKSSNFLRLSDRTDPATVYSLVTRSWGFRAPNLVVSVLGGSEGPVLQTWLQDLLRRGLVRAAQSTGAWIVTGGLHTGIGRHVGVAVRDHQTASTGGSKVVAMGVAPWGVVRNRDMLINPKGSFPARYRWRGDPEDGVEFPLDYNYSAFFLVDDGTYGRMGGENRFRLRFESYVAQQKTGVGGTGIDIPVLLLLIEGDEKMLKRIEDATQAQLPCLLVAGSGGAADCLVETLEDTLAPGSGGLRRGEARDRIRRYFPKGDPEVLQAQVERIMTRKELLTVYSSEDGSEEFETIVLRALVKACGSSEASAYLDELRLAVAWNRVDIAQSELFRGDIQWRSFHLEASLMDALLNDRPEFVRLLISHGLSLGHFLTPVRLAQLYSAVSPNSLIRNLLDQASHASSSKSPPANGAAELRPPNVGQVLRTLLGETCAPRYPARNTRHSLLGQDHRENDSLLMDWANMQQDASFEQAPWSDLLIWALLLNRAQMAIYFWEKGSNSVASALGACLLLRVMARLEWEAEEAARRKDLAAKFESMSVDLFGECYHNSEYRAARLLLRRCPLWGEATCLQLAMQADARAFFAQDGVQSLLTQKWWGEMDSTNPIWALLLTFFCPPLIYTNLILFRKSEEEPTQKDLDFDMDSSMNGAGPLGPAEPSAKVALERRRRRRPGHTLCCGGCSKRWSYFWGAPVTAFLGNVVSYLLFLLLFAHVLLVDFQPTKPGVFELLLYFWAFTLLCEELRQGLGGGWGTLANGGPGPGKAPLRHRLHLYLLDTWNQCDLLALTCFLLGVGCRLTPGLFDLGRTVLCLDFMIFTLRLLHIFTVNKQLGPKIVIVSKMMKDVFFFLFFLCVWLVAYGVATEGILRPQDRSLPSILRRVFYRPYLQIFGQIPQEEMDVALMNPSNCSAERGSWAHPEGPVAGSCVSQYANWLVVLLLIVFLLVANILLLNLLIAMFSYTFNKVHGNSDLYWKAQRYSLIREFHSRPALAPPLIIISHLRLLFKWLRRCHRTNLPASPVFEHFRVCLSKEAERTLLTWESVHKENFLLAQARDKRDSDSERLKRTSQKVDTALKQLGQIREYDRRLRGLEREVQHCSRVLTWMAEALSHSALLPPGGPPPPSPTGSKD.

The Cytoplasmic portion of the chain corresponds to 1-776 (MVGQEKEQSW…SYFWGAPVTA (776 aa)). ATP is bound by residues arginine 172, arginine 215, and leucine 226. Residues aspartate 271, alanine 393, aspartate 396, and glutamate 397 each contribute to the Ca(2+) site. ATP is bound by residues arginine 422 and glycine 449. Residues serine 527 and serine 538 each carry the phosphoserine modification. Residues 777-797 (FLGNVVSYLLFLLLFAHVLLV) traverse the membrane as a helical segment. The Extracellular portion of the chain corresponds to 798–808 (DFQPTKPGVFE). Residues 809–829 (LLLYFWAFTLLCEELRQGLGG) form a helical membrane-spanning segment. Ca(2+)-binding residues include glutamate 822 and glutamine 825. Topologically, residues 830–857 (GWGTLANGGPGPGKAPLRHRLHLYLLDT) are cytoplasmic. The helical transmembrane segment at 858 to 878 (WNQCDLLALTCFLLGVGCRLT) threads the bilayer. Ca(2+) is bound by residues asparagine 859 and aspartate 862. The Extracellular segment spans residues 879–880 (PG). The helical transmembrane segment at 881–904 (LFDLGRTVLCLDFMIFTLRLLHIF) threads the bilayer. Residues 905–924 (TVNKQLGPKIVIVSKMMKDV) are Cytoplasmic-facing. A helical transmembrane segment spans residues 925 to 945 (FFFLFFLCVWLVAYGVATEGI). Residues 946–957 (LRPQDRSLPSIL) lie on the Extracellular side of the membrane. Positions 958–978 (RRVFYRPYLQIFGQIPQEEMD) form an intramembrane region, pore-forming. The Selectivity filter signature appears at 969–971 (FGQ). Over 979 to 1013 (VALMNPSNCSAERGSWAHPEGPVAGSCVSQYANWL) the chain is Extracellular. Cysteine 987 and cysteine 1005 form a disulfide bridge. Residues 1014–1034 (VVLLLIVFLLVANILLLNLLI) form a helical membrane-spanning segment. Residues 1035–1208 (AMFSYTFNKV…PPPSPTGSKD (174 aa)) are Cytoplasmic-facing. The segment at 1070–1170 (APPLIIISHL…EYDRRLRGLE (101 aa)) is calmodulin-binding. Positions 1128–1180 (LAQARDKRDSDSERLKRTSQKVDTALKQLGQIREYDRRLRGLEREVQHCSRVL) form a coiled coil. The mediates modulation by decavanadate and PIP2-binding stretch occupies residues 1130 to 1135 (QARDKR). Serine 1139 and serine 1146 each carry phosphoserine; by PKC. Residues 1189–1208 (HSALLPPGGPPPPSPTGSKD) form a disordered region. Over residues 1195–1208 (PGGPPPPSPTGSKD) the composition is skewed to pro residues.

The protein belongs to the transient receptor (TC 1.A.4) family. LTrpC subfamily. TRPM4 sub-subfamily. Homotetramer. Post-translationally, phosphorylation by PKC leads to increase the sensitivity to Ca(2+). Sumoylated. Desumoylated by SENP1. Isoform 1 is highly expressed in the testis with a moderate expression in the brain, spleen and thymus. Isoform 2 is only expressed in the brain and spleen.

The protein resides in the cell membrane. The protein localises to the endoplasmic reticulum. It is found in the golgi apparatus. The catalysed reaction is Na(+)(in) = Na(+)(out). The enzyme catalyses K(+)(in) = K(+)(out). Its activity is regulated as follows. Gating is voltage-dependent and repressed by decavanadate. Calmodulin-binding confers the Ca(2+) sensitivity. ATP is able to restore Ca(2+) sensitivity after desensitization. Phosphatidylinositol 4,5-bisphosphate (PIP2)-binding strongly enhances activity, by increasing the channel's Ca(2+) sensitivity and shifting its voltage dependence of activation towards negative potentials. Activity is also enhanced by 3,5-bis(trifluoromethyl)pyrazole derivative (BTP2). Exhibits pronounced temperature sensitivity, with activities strongly intensifying near physiological temperatures. TRPM4 can adopt distinct conformations at different temperatures, markedly influencing where and how ligands interact with them. Functionally, calcium-activated selective cation channel that mediates membrane depolarization. While it is activated by increase in intracellular Ca(2+), it is impermeable to it. Mediates transport of monovalent cations (Na(+) &gt; K(+) &gt; Cs(+) &gt; Li(+)), leading to depolarize the membrane. It thereby plays a central role in cadiomyocytes, neurons from entorhinal cortex, dorsal root and vomeronasal neurons, endocrine pancreas cells, kidney epithelial cells, cochlea hair cells etc. Participates in T-cell activation by modulating Ca(2+) oscillations after T lymphocyte activation, which is required for NFAT-dependent IL2 production. Involved in myogenic constriction of cerebral arteries. Controls insulin secretion in pancreatic beta-cells. May also be involved in pacemaking or could cause irregular electrical activity under conditions of Ca(2+) overload. Affects T-helper 1 (Th1) and T-helper 2 (Th2) cell motility and cytokine production through differential regulation of calcium signaling and NFATC1 localization. Enhances cell proliferation through up-regulation of the beta-catenin signaling pathway. Plays a role in keratinocyte differentiation. Lacks channel activity. The chain is Transient receptor potential cation channel subfamily M member 4 (Trpm4) from Rattus norvegicus (Rat).